The sequence spans 151 residues: MSRELIVSKIRSGTVIDHIPAGRALAVLRILGITGKEGVRIALVMNVESKKLGKKDIIKIEDRELTPEEVNIISAVAPTATINIIEDFRVVRKFKVTPPEVIRGKFKCRNPTCITNAPREPVEPTFYLVRREPPLFICAYCGRYHELSDLI.

4 residues coordinate Zn(2+): C108, C113, C138, and C141.

Belongs to the PyrI family. In terms of assembly, contains catalytic and regulatory chains. Zn(2+) is required as a cofactor.

Its function is as follows. Involved in allosteric regulation of aspartate carbamoyltransferase. The sequence is that of Aspartate carbamoyltransferase regulatory chain from Pyrobaculum islandicum (strain DSM 4184 / JCM 9189 / GEO3).